Consider the following 267-residue polypeptide: Trehalose-phosphate phosphatase (267 aa).

Catalysis depends on aspartate 20, which acts as the Nucleophile. Residues aspartate 20, aspartate 22, and aspartate 198 each coordinate Mg(2+). 20–22 (DLD) contacts substrate.

It belongs to the trehalose phosphatase family. It depends on Mg(2+) as a cofactor.

The enzyme catalyses alpha,alpha-trehalose 6-phosphate + H2O = alpha,alpha-trehalose + phosphate. It participates in glycan biosynthesis; trehalose biosynthesis. In terms of biological role, removes the phosphate from trehalose 6-phosphate to produce free trehalose. In Salmonella typhimurium (strain SL1344), this protein is Trehalose-phosphate phosphatase (otsB).